Reading from the N-terminus, the 545-residue chain is Cleavage and polyadenylation specificity factor subunit 6 (545 aa).

The tract at residues 37 to 69 (ISPSANNGDAPEDRDYLDSLPAPGGNEGSKGAP) is disordered. The RRM domain maps to 81-161 (IALYIGNLTW…QNPIVTPCNK (81 aa)). The span at 165–180 (SQFEMQSRKSTQSGQM) shows a compositional bias: polar residues. Disordered regions lie at residues 165–404 (SQFE…PLSE) and 478–545 (YGSV…YRHR). The span at 184 to 200 (GKAGPPGSGSRGGGFPP) shows a compositional bias: gly residues. Pro residues-rich tracts occupy residues 220-230 (PVGPGGPPPHF), 237-265 (PRLP…PLGG), 287-363 (PMGP…PPGN), and 372-383 (GPPPGDPYGRPP). Basic and acidic residues-rich tracts occupy residues 384-397 (PYDR…DMDA) and 483-497 (GRRE…SRSR). A compositionally biased stretch (basic residues) spans 498–508 (EKSRRHKSRSR). The span at 509 to 545 (DRHEDYYRERSRERDRHRERDRDRERDREREREYRHR) shows a compositional bias: basic and acidic residues.

Belongs to the RRM CPSF6/7 family. Component of the cleavage factor Im (CFIm) complex.

Its subcellular location is the nucleus. The protein localises to the nucleoplasm. It localises to the nucleus speckle. The protein resides in the cytoplasm. In terms of biological role, component of the cleavage factor Im (CFIm) complex that functions as an activator of the pre-mRNA 3'-end cleavage and polyadenylation processing required for the maturation of pre-mRNA into functional mRNAs. CFIm contributes to the recruitment of multiprotein complexes on specific sequences on the pre-mRNA 3'-end, so called cleavage and polyadenylation signals (pA signals). Most pre-mRNAs contain multiple pA signals, resulting in alternative cleavage and polyadenylation (APA) producing mRNAs with variable 3'-end formation. The CFIm complex acts as a key regulator of cleavage and polyadenylation site choice during APA through its binding to 5'-UGUA-3' elements localized in the 3'-untranslated region (UTR) for a huge number of pre-mRNAs. Plays a role in mRNA export. This chain is Cleavage and polyadenylation specificity factor subunit 6, found in Danio rerio (Zebrafish).